Here is an 826-residue protein sequence, read N- to C-terminus: MADAYCLTNFIDFSLSLSLPLKHHNRIKYTCFDISDSYIIFGASSGSLYLFNRNGKFLLLIPNKHGAITSLSISANSKYVAFATQRSLICVYAVNLSAQATPQVIFTHLDQSVQVTCIHWTQDEKQFYYGDSRGQVSLVLLSSFIGHSLLFNMTVHPLLYLDSPIVQIDDFEYLLLVSNCTKCILCNTEYEDYKQIGNRPRDGAFGACFFVSPQESLQPSRIYCARPGSRVWEVDFEGEVIQTHQFKTALATAPARIQRPGSGTDELDANAELLDYQPQNLQFAKVQRLNDDFLLAFTELGLYIFDIRRSAVVLWSNQFERIADCRSSGSEIFVFTQSGALYSVQLQTLQSHAVSLIQQSKLLPCANLLRQHVRYFADKAREDYELKQLNPLKQLLIERQEYELLNDISVIFDAITQCTGSALDTHSSGGSSATTERSLSGGSSSRAPPKGVYVLENAFCDNLKQPLKTGHFKDALLTVTGKFGKNIIKYKFNIFAEEQQQLVRELIPASERSLPFKDIKARYESGSEDQEEEIVRRCKKPAPQVPHISPEEKTLYNLYLIAKSAKFSRTQCVDRYRAVFDEYAAGELVNLLEKLAQVMVEHGDTPDQAQRNCYEMYFDYLDPEMIWEVDDATRDHIAAGFVLLNTSQNAEIVKCEHCSFPLRFDTSCQYHELGAVLLRYFWSRGEQLKCFDVVQSVPALLDVLAKFYLAEQNLTKVVAIVLNYGLPELLADVGKQLSVSAWGRCFEQFVELQRGGRLVCANCECISGVEQEQLGRHFFYNWNCFLNIALDHMSAGDTLALIFKWSSYIPNDAIDREFYSRCLLKG.

3 WD repeats span residues 22–61, 63–102, and 110–149; these read KHHN…LLLI, NKHG…QATP, and DQSV…GHSL. The segment covering 422–446 has biased composition (polar residues); sequence ALDTHSSGGSSATTERSLSGGSSSR. The tract at residues 422–447 is disordered; sequence ALDTHSSGGSSATTERSLSGGSSSRA.

The protein belongs to the HPS5 family. Expressed in eye pigment granules.

Functionally, has a role in the biogenesis of eye pigment granules. Eye pigment granules are specialized forms of late endosomes or lysosomes. Biogenesis of pigment granules in the eye requires molecular components required for protein delivery to lysosomes. This Drosophila melanogaster (Fruit fly) protein is BLOC-2 complex member HPS5 homolog.